We begin with the raw amino-acid sequence, 380 residues long: GDSL esterase/lipase At3g26430 (380 aa).

The first 25 residues, 1 to 25 (METNLLLVKCVLLASCLIHPRACSP), serve as a signal peptide directing secretion. Catalysis depends on serine 38, which acts as the Nucleophile. N-linked (GlcNAc...) asparagine glycosylation is found at asparagine 97, asparagine 115, and asparagine 183. Catalysis depends on residues aspartate 346 and histidine 349.

The protein belongs to the 'GDSL' lipolytic enzyme family.

The protein localises to the secreted. The enzyme catalyses hexadecanoate ester + H2O = an aliphatic alcohol + hexadecanoate + H(+). It carries out the reaction a butanoate ester + H2O = an aliphatic alcohol + butanoate + H(+). Its activity is regulated as follows. Lipase activity is inhibited by phenylmethylsulfonyl fluoride (PMSF), but not neostigmine bromide (NB). Its function is as follows. Lipase that can hydrolyze p-nitrophenyl butyrate and p-nitrophenyl palmitate in vitro. Possesses low activity against p-nitrophenyl acetate. Substrate preference is p-nitrophenyl palmitate &gt; p-nitrophenyl butyrate &gt;&gt; p-nitrophenyl acetate. Lacks cholinesterase activity. The protein is GDSL esterase/lipase At3g26430 of Arabidopsis thaliana (Mouse-ear cress).